A 21-amino-acid polypeptide reads, in one-letter code: Azemiopsin (21 aa).

A compositionally biased stretch (pro residues) spans 1–14; it reads DNWWPKPPHQGPRP. Residues 1-21 are disordered; sequence DNWWPKPPHQGPRPPRPRPKP. Implicated in receptor binding regions lie at residues 3-6, 8-11, and 13-14; these read WWPK, PHQG, and RP.

Monomer. In terms of tissue distribution, expressed by the venom gland.

The protein localises to the secreted. Functionally, in vitro, reversibly blocks human muscle-type nicotinic acetylcholine receptors (nAChR) alpha-1-beta-1-epsilon-delta/CHRNA1-CHRNB1-CHRNE-CHRND (EC(50)=0.44 uM) and alpha-1-beta-1-gamma-delta/CHRNA1-CHRNB1-CHRNG-CHRND (EC(50)=1.56 uM). Binds to nAChR from T.californica (IC(50)=0.03-0.18 uM), human neuronal nAChR alpha-7/CHRNA7 (IC(50)=22 uM) and acetylcholine-binding proteins (AChBP) from L.stagnalis (IC(50)=63 uM) and A.californica (IC(50)=230 uM). The polypeptide is Azemiopsin (Azemiops feae (Fea's viper)).